Consider the following 389-residue polypeptide: S-adenosylmethionine synthase (389 aa).

His-17 serves as a coordination point for ATP. Residue Asp-19 participates in Mg(2+) binding. Glu-45 is a binding site for K(+). L-methionine is bound by residues Glu-58 and Gln-101. Residues 101-111 (QSPDIAQGVNP) are flexible loop. ATP contacts are provided by residues 168–170 (DGK), 234–235 (RF), Asp-243, 249–250 (RK), and Lys-270. Asp-243 contributes to the L-methionine binding site. Lys-274 lines the L-methionine pocket.

The protein belongs to the AdoMet synthase family. Homotetramer; dimer of dimers. Mg(2+) serves as cofactor. The cofactor is K(+).

The protein localises to the cytoplasm. It catalyses the reaction L-methionine + ATP + H2O = S-adenosyl-L-methionine + phosphate + diphosphate. It participates in amino-acid biosynthesis; S-adenosyl-L-methionine biosynthesis; S-adenosyl-L-methionine from L-methionine: step 1/1. In terms of biological role, catalyzes the formation of S-adenosylmethionine (AdoMet) from methionine and ATP. The overall synthetic reaction is composed of two sequential steps, AdoMet formation and the subsequent tripolyphosphate hydrolysis which occurs prior to release of AdoMet from the enzyme. The polypeptide is S-adenosylmethionine synthase (Syntrophobacter fumaroxidans (strain DSM 10017 / MPOB)).